A 216-amino-acid chain; its full sequence is Probable GTP-binding protein EngB (216 aa).

In terms of domain architecture, EngB-type G spans 37–214 (GSVEIAFAGR…RAAMIRLLDE (178 aa)). Residues 45-52 (GRSNVGKS), 72-76 (GRTQE), 92-95 (DMPG), 159-162 (TKAD), and 193-195 (TSS) each bind GTP. Mg(2+)-binding residues include serine 52 and threonine 74.

The protein belongs to the TRAFAC class TrmE-Era-EngA-EngB-Septin-like GTPase superfamily. EngB GTPase family. Mg(2+) serves as cofactor.

Functionally, necessary for normal cell division and for the maintenance of normal septation. The polypeptide is Probable GTP-binding protein EngB (Rhodopseudomonas palustris (strain ATCC BAA-98 / CGA009)).